A 222-amino-acid polypeptide reads, in one-letter code: Twisted gastrulation protein homolog 1 (222 aa).

Positions 1–24 are cleaved as a signal peptide; that stretch reads MKSHYIVLALASLTFLLCLPVSQS. N-linked (GlcNAc...) asparagine glycans are attached at residues Asn-80 and Asn-146.

It belongs to the twisted gastrulation protein family. In terms of assembly, interacts with CHRD and/or BMP4. This interaction enhances CHRD/BMP4 complex formation. Interacts with BMP7. Expressed in lymph node, liver, kidney, and lung. Expression in the kidney was stronger in the medulla than in the cortex, particularly in the cells surrounding the medullary tubules. Expressed in growth plate cartilage of long bones, ribs, and digits and to a lesser extent also in the resting zone of the epiphysis, trabecular bone, and vertebral cartilage. Expression seems to be absent from other skeletal tissues including muscle, skin, and fibroblasts.

Its subcellular location is the secreted. May be involved in dorsoventral axis formation. Seems to antagonize BMP signaling by forming ternary complexes with CHRD and BMPs, thereby preventing BMPs from binding to their receptors. In addition to the anti-BMP function, also has pro-BMP activity, partly mediated by cleavage and degradation of CHRD, which releases BMPs from ternary complexes. May be an important modulator of BMP-regulated cartilage development and chondrocyte differentiation. May play a role in thymocyte development. The sequence is that of Twisted gastrulation protein homolog 1 (Twsg1) from Mus musculus (Mouse).